Here is a 203-residue protein sequence, read N- to C-terminus: Dual-action ribosomal maturation protein DarP (203 aa).

Residues 1–13 (MQPMTRNSRNSPG) are compositionally biased toward polar residues. The tract at residues 1-39 (MQPMTRNSRNSPGSRFPGAFAPEPDMDEPKSKSQKKRDM) is disordered. Basic and acidic residues predominate over residues 27 to 39 (DEPKSKSQKKRDM).

The protein belongs to the DarP family.

The protein resides in the cytoplasm. Functionally, member of a network of 50S ribosomal subunit biogenesis factors which assembles along the 30S-50S interface, preventing incorrect 23S rRNA structures from forming. Promotes peptidyl transferase center (PTC) maturation. This chain is Dual-action ribosomal maturation protein DarP, found in Cupriavidus pinatubonensis (strain JMP 134 / LMG 1197) (Cupriavidus necator (strain JMP 134)).